The sequence spans 426 residues: Selenocysteine lyase (426 aa).

At K239 the chain carries N6-(pyridoxal phosphate)lysine. Catalysis depends on C367, which acts as the S-selanylcysteine intermediate.

This sequence belongs to the class-V pyridoxal-phosphate-dependent aminotransferase family. Homodimer. Pyridoxal 5'-phosphate serves as cofactor.

It is found in the cytoplasm. Its subcellular location is the cytosol. It carries out the reaction L-selenocysteine + AH2 = hydrogenselenide + L-alanine + A + H(+). In terms of biological role, catalyzes the decomposition of L-selenocysteine to L-alanine and elemental selenium. This chain is Selenocysteine lyase (scly), found in Xenopus laevis (African clawed frog).